Reading from the N-terminus, the 199-residue chain is Large ribosomal subunit protein bL25 (199 aa).

The protein belongs to the bacterial ribosomal protein bL25 family. CTC subfamily. In terms of assembly, part of the 50S ribosomal subunit; part of the 5S rRNA/L5/L18/L25 subcomplex. Contacts the 5S rRNA. Binds to the 5S rRNA independently of L5 and L18.

Functionally, this is one of the proteins that binds to the 5S RNA in the ribosome where it forms part of the central protuberance. The sequence is that of Large ribosomal subunit protein bL25 from Caldanaerobacter subterraneus subsp. tengcongensis (strain DSM 15242 / JCM 11007 / NBRC 100824 / MB4) (Thermoanaerobacter tengcongensis).